Consider the following 353-residue polypeptide: Photosystem II D2 protein (353 aa).

At T2 the chain carries N-acetylthreonine. T2 carries the phosphothreonine modification. The chain crosses the membrane as a helical span at residues 41-61 (CAYFALGGWFTGTTFVTSWYT). H118 serves as a coordination point for chlorophyll a. The helical transmembrane segment at 125 to 141 (GFMLRQFELARSVQLRP) threads the bilayer. Pheophytin a-binding residues include Q130 and N143. Residues 153–166 (VFVSVFLIYPLGQS) traverse the membrane as a helical segment. H198 contributes to the chlorophyll a binding site. The helical transmembrane segment at 208 to 228 (AALLCAIHGATVENTLFEDGD) threads the bilayer. Residues H215 and F262 each coordinate a plastoquinone. H215 contributes to the Fe cation binding site. H269 is a Fe cation binding site. A helical transmembrane segment spans residues 279 to 295 (GLWMSALGVVGLALNLR).

Belongs to the reaction center PufL/M/PsbA/D family. PSII is composed of 1 copy each of membrane proteins PsbA, PsbB, PsbC, PsbD, PsbE, PsbF, PsbH, PsbI, PsbJ, PsbK, PsbL, PsbM, PsbT, PsbX, PsbY, PsbZ, Psb30/Ycf12, at least 3 peripheral proteins of the oxygen-evolving complex and a large number of cofactors. It forms dimeric complexes. It depends on The D1/D2 heterodimer binds P680, chlorophylls that are the primary electron donor of PSII, and subsequent electron acceptors. It shares a non-heme iron and each subunit binds pheophytin, quinone, additional chlorophylls, carotenoids and lipids. There is also a Cl(-1) ion associated with D1 and D2, which is required for oxygen evolution. The PSII complex binds additional chlorophylls, carotenoids and specific lipids. as a cofactor.

Its subcellular location is the plastid. The protein localises to the chloroplast thylakoid membrane. It catalyses the reaction 2 a plastoquinone + 4 hnu + 2 H2O = 2 a plastoquinol + O2. Photosystem II (PSII) is a light-driven water:plastoquinone oxidoreductase that uses light energy to abstract electrons from H(2)O, generating O(2) and a proton gradient subsequently used for ATP formation. It consists of a core antenna complex that captures photons, and an electron transfer chain that converts photonic excitation into a charge separation. The D1/D2 (PsbA/PsbD) reaction center heterodimer binds P680, the primary electron donor of PSII as well as several subsequent electron acceptors. D2 is needed for assembly of a stable PSII complex. The polypeptide is Photosystem II D2 protein (Nandina domestica (Heavenly bamboo)).